The chain runs to 128 residues: Sirohydrochlorin cobaltochelatase (128 aa).

His9 (proton acceptor) is an active-site residue. Co(2+) is bound at residue His9. Residues Lys43 and 68–73 (FATGTH) contribute to the substrate site. His73 contacts Co(2+).

The protein belongs to the CbiX family. CbiXS subfamily. Homotetramer; dimer of dimers.

It carries out the reaction Co-sirohydrochlorin + 2 H(+) = sirohydrochlorin + Co(2+). The protein operates within cofactor biosynthesis; adenosylcobalamin biosynthesis; cob(II)yrinate a,c-diamide from sirohydrochlorin (anaerobic route): step 1/10. In terms of biological role, catalyzes the insertion of Co(2+) into sirohydrochlorin as part of the anaerobic pathway to cobalamin biosynthesis. In Saccharolobus solfataricus (strain ATCC 35092 / DSM 1617 / JCM 11322 / P2) (Sulfolobus solfataricus), this protein is Sirohydrochlorin cobaltochelatase.